The chain runs to 244 residues: CTD nuclear envelope phosphatase 1 (244 aa).

The chain crosses the membrane as a helical span at residues 7 to 29; that stretch reads LLGLRGFVAFAAKLWSFVLYLLR. The FCP1 homology domain maps to 58-225; that stretch reads QVKRKVLVLD…NLLPMLDALR (168 aa).

It belongs to the dullard family. In terms of assembly, interacts with bmpr1a, bmpr1b and bmpr2.

The protein localises to the membrane. It localises to the cytoplasm. Its subcellular location is the perinuclear region. It carries out the reaction O-phospho-L-seryl-[protein] + H2O = L-seryl-[protein] + phosphate. It catalyses the reaction O-phospho-L-threonyl-[protein] + H2O = L-threonyl-[protein] + phosphate. In terms of biological role, serine/threonine protein phosphatase that may dephosphorylate and activate lipins. Lipins are phosphatidate phosphatases that catalyze the conversion of phosphatidic acid to diacylglycerol and control the metabolism of fatty acids at different levels. May indirectly modulate the lipid composition of nuclear and/or endoplasmic reticulum membranes and be required for proper nuclear membrane morphology and/or dynamics. May also indirectly regulate the production of lipid droplets and triacylglycerol. Induces neuronal differentiation by antagonizing BMP signaling. Acts both by dephosphorylating BMPR1A and by promoting BMPR2 proteasomal degradation. The polypeptide is CTD nuclear envelope phosphatase 1 (ctdnep1) (Xenopus laevis (African clawed frog)).